The primary structure comprises 301 residues: 4-hydroxy-tetrahydrodipicolinate synthase (301 aa).

Residue T46 coordinates pyruvate. Y134 functions as the Proton donor/acceptor in the catalytic mechanism. K162 (schiff-base intermediate with substrate) is an active-site residue. I203 serves as a coordination point for pyruvate.

The protein belongs to the DapA family. As to quaternary structure, homotetramer; dimer of dimers.

The protein localises to the cytoplasm. It carries out the reaction L-aspartate 4-semialdehyde + pyruvate = (2S,4S)-4-hydroxy-2,3,4,5-tetrahydrodipicolinate + H2O + H(+). It functions in the pathway amino-acid biosynthesis; L-lysine biosynthesis via DAP pathway; (S)-tetrahydrodipicolinate from L-aspartate: step 3/4. Catalyzes the condensation of (S)-aspartate-beta-semialdehyde [(S)-ASA] and pyruvate to 4-hydroxy-tetrahydrodipicolinate (HTPA). The polypeptide is 4-hydroxy-tetrahydrodipicolinate synthase (Anaplasma marginale (strain Florida)).